Here is a 271-residue protein sequence, read N- to C-terminus: uncharacterized protein (271 aa).

The interval 1 to 20 (MPDLHTLPAGSRPERAIRNN) is disordered.

The protein belongs to the PEP2 family.

This is an uncharacterized protein from Aspergillus terreus (strain NIH 2624 / FGSC A1156).